Here is a 558-residue protein sequence, read N- to C-terminus: Formate--tetrahydrofolate ligase (558 aa).

ATP is bound at residue 65–72 (TPAGEGKT).

This sequence belongs to the formate--tetrahydrofolate ligase family.

It carries out the reaction (6S)-5,6,7,8-tetrahydrofolate + formate + ATP = (6R)-10-formyltetrahydrofolate + ADP + phosphate. The protein operates within one-carbon metabolism; tetrahydrofolate interconversion. This Methylobacterium sp. (strain 4-46) protein is Formate--tetrahydrofolate ligase.